We begin with the raw amino-acid sequence, 283 residues long: Probable endonuclease 4 (283 aa).

Zn(2+) contacts are provided by His69, His113, Glu148, Asp182, His185, His217, Asp230, His232, and Glu262.

The protein belongs to the AP endonuclease 2 family. Zn(2+) serves as cofactor.

The enzyme catalyses Endonucleolytic cleavage to 5'-phosphooligonucleotide end-products.. Endonuclease IV plays a role in DNA repair. It cleaves phosphodiester bonds at apurinic or apyrimidinic (AP) sites, generating a 3'-hydroxyl group and a 5'-terminal sugar phosphate. This chain is Probable endonuclease 4, found in Bifidobacterium longum (strain NCC 2705).